The primary structure comprises 191 residues: Putative leucine efflux protein (191 aa).

Transmembrane regions (helical) follow at residues Gly-28–Ile-48, Thr-50–Glu-70, Ile-101–Ile-121, Phe-132–Ile-152, and Leu-167–Ala-187.

This sequence belongs to the Rht family.

It is found in the cell inner membrane. It carries out the reaction L-leucine(in) + H(+)(out) = L-leucine(out) + H(+)(in). Functionally, exporter of leucine. The protein is Putative leucine efflux protein (leuE) of Shigella boydii serotype 4 (strain Sb227).